The chain runs to 394 residues: MPAFDYNRVFLIVMDSVGIGEAPDAEKFNDKGADTLGHIAEHMGGISLPNMAKLGLSNIREIKGVEKAEKPLAYYGKMKEASNGKDTMTGHWEIMGLYIDKPFRVFPEGFPDELIHELEQKSGRKVIGNKPASGTAILDELGAEHMETGALIVYTSADSVLQIAAHEEVVPLEELYKICEIARELTLDEKYMVGRVIARPFVGKPGEFKRTPNRHDYALKPFDRTVMNELKDDSFDVIAIGKISDIYDGEGITESLRTKSNMDGMDKLVQTLDKGFTGISFVNLVDFDALFGHRRDPEGYGKALEEFDARLPEVFEKMREDDLLIITADHGNDPVHHGTDHTREYVPLLVYSKKHEKPGALPLADTFADIGATIADNFKTNMPKYGKSFLSLLK.

Mn(2+) contacts are provided by D15, D288, H293, D329, H330, and H341.

The protein belongs to the phosphopentomutase family. Mn(2+) serves as cofactor.

It localises to the cytoplasm. The enzyme catalyses 2-deoxy-alpha-D-ribose 1-phosphate = 2-deoxy-D-ribose 5-phosphate. The catalysed reaction is alpha-D-ribose 1-phosphate = D-ribose 5-phosphate. Its pathway is carbohydrate degradation; 2-deoxy-D-ribose 1-phosphate degradation; D-glyceraldehyde 3-phosphate and acetaldehyde from 2-deoxy-alpha-D-ribose 1-phosphate: step 1/2. Functionally, isomerase that catalyzes the conversion of deoxy-ribose 1-phosphate (dRib-1-P) and ribose 1-phosphate (Rib-1-P) to deoxy-ribose 5-phosphate (dRib-5-P) and ribose 5-phosphate (Rib-5-P), respectively. This chain is Phosphopentomutase, found in Bacillus licheniformis (strain ATCC 14580 / DSM 13 / JCM 2505 / CCUG 7422 / NBRC 12200 / NCIMB 9375 / NCTC 10341 / NRRL NRS-1264 / Gibson 46).